The primary structure comprises 454 residues: Argininosuccinate synthase (454 aa).

ATP is bound by residues Ala-17–Ser-25 and Ala-43. Tyr-99 is a binding site for L-citrulline. Gly-129 and Thr-131 together coordinate ATP. L-aspartate-binding residues include Thr-131, Asn-135, and Asp-136. Asn-135 contacts L-citrulline. Residue Asp-136 participates in ATP binding. Arg-139 and Ser-192 together coordinate L-citrulline. Residue Asp-194 participates in ATP binding. 3 residues coordinate L-citrulline: Thr-201, Glu-203, and Glu-280.

Belongs to the argininosuccinate synthase family. Type 2 subfamily. As to quaternary structure, homotetramer.

It localises to the cytoplasm. The enzyme catalyses L-citrulline + L-aspartate + ATP = 2-(N(omega)-L-arginino)succinate + AMP + diphosphate + H(+). It participates in amino-acid biosynthesis; L-arginine biosynthesis; L-arginine from L-ornithine and carbamoyl phosphate: step 2/3. The sequence is that of Argininosuccinate synthase from Yersinia enterocolitica serotype O:8 / biotype 1B (strain NCTC 13174 / 8081).